Consider the following 229-residue polypeptide: Large ribosomal subunit protein uL1 (229 aa).

It belongs to the universal ribosomal protein uL1 family. As to quaternary structure, part of the 50S ribosomal subunit.

Binds directly to 23S rRNA. The L1 stalk is quite mobile in the ribosome, and is involved in E site tRNA release. Its function is as follows. Protein L1 is also a translational repressor protein, it controls the translation of the L11 operon by binding to its mRNA. This is Large ribosomal subunit protein uL1 from Lactococcus lactis subsp. lactis (strain IL1403) (Streptococcus lactis).